The chain runs to 70 residues: Sec-independent protein translocase protein TatA (70 aa).

The helical transmembrane segment at 1-21 (MGSFSIWHWLIVLVVVALLFG) threads the bilayer. The interval 45–70 (KGESEQAEDETAKPLPKERDKDSARG) is disordered.

Belongs to the TatA/E family. In terms of assembly, the Tat system comprises two distinct complexes: a TatABC complex, containing multiple copies of TatA, TatB and TatC subunits, and a separate TatA complex, containing only TatA subunits. Substrates initially bind to the TatABC complex, which probably triggers association of the separate TatA complex to form the active translocon.

The protein localises to the cell inner membrane. In terms of biological role, part of the twin-arginine translocation (Tat) system that transports large folded proteins containing a characteristic twin-arginine motif in their signal peptide across membranes. TatA could form the protein-conducting channel of the Tat system. This Phenylobacterium zucineum (strain HLK1) protein is Sec-independent protein translocase protein TatA.